A 210-amino-acid polypeptide reads, in one-letter code: Probable nicotinate-nucleotide adenylyltransferase (210 aa).

Belongs to the NadD family.

It catalyses the reaction nicotinate beta-D-ribonucleotide + ATP + H(+) = deamido-NAD(+) + diphosphate. The protein operates within cofactor biosynthesis; NAD(+) biosynthesis; deamido-NAD(+) from nicotinate D-ribonucleotide: step 1/1. In terms of biological role, catalyzes the reversible adenylation of nicotinate mononucleotide (NaMN) to nicotinic acid adenine dinucleotide (NaAD). The sequence is that of Probable nicotinate-nucleotide adenylyltransferase from Streptococcus pyogenes serotype M3 (strain ATCC BAA-595 / MGAS315).